The primary structure comprises 194 residues: dTTP/UTP pyrophosphatase (194 aa).

Residue Asp-68 is the Proton acceptor of the active site.

This sequence belongs to the Maf family. YhdE subfamily. Requires a divalent metal cation as cofactor.

The protein localises to the cytoplasm. It catalyses the reaction dTTP + H2O = dTMP + diphosphate + H(+). It carries out the reaction UTP + H2O = UMP + diphosphate + H(+). Functionally, nucleoside triphosphate pyrophosphatase that hydrolyzes dTTP and UTP. May have a dual role in cell division arrest and in preventing the incorporation of modified nucleotides into cellular nucleic acids. This Clostridioides difficile (strain 630) (Peptoclostridium difficile) protein is dTTP/UTP pyrophosphatase.